The chain runs to 68 residues: Protein transport protein Sec61 subunit gamma (68 aa).

The Cytoplasmic segment spans residues 1–32; that stretch reads MDQVTKFIEPGRQFAKDSIRLVKRCTKPDRKE. A helical transmembrane segment spans residues 33-61; that stretch reads FQKIAVATAIGFCIMGFIGFFVKLIHIPI. Residues 62–68 are Extracellular-facing; the sequence is NNIIVGS.

It belongs to the SecE/SEC61-gamma family. In terms of assembly, heterotrimeric complex composed of SEC61-alpha, SEC61-beta and SEC61-gamma.

The protein resides in the endoplasmic reticulum membrane. Its function is as follows. Necessary for protein translocation in the endoplasmic reticulum. The sequence is that of Protein transport protein Sec61 subunit gamma (SEC61G) from Gryllotalpa orientalis (Oriental mole cricket).